Here is a 485-residue protein sequence, read N- to C-terminus: Probable cobyric acid synthase (485 aa).

The 186-residue stretch at 250 to 435 (EIEVAVIRLP…LHGLFDNRNI (186 aa)) folds into the GATase cobBQ-type domain. The active-site Nucleophile is C328. Residue H427 is part of the active site.

It belongs to the CobB/CobQ family. CobQ subfamily.

It functions in the pathway cofactor biosynthesis; adenosylcobalamin biosynthesis. Catalyzes amidations at positions B, D, E, and G on adenosylcobyrinic A,C-diamide. NH(2) groups are provided by glutamine, and one molecule of ATP is hydrogenolyzed for each amidation. This chain is Probable cobyric acid synthase, found in Methanosarcina mazei (strain ATCC BAA-159 / DSM 3647 / Goe1 / Go1 / JCM 11833 / OCM 88) (Methanosarcina frisia).